Consider the following 781-residue polypeptide: Homeobox protein SIX4 (781 aa).

A compositionally biased stretch (polar residues) spans 1–10; sequence MSSSSPTGQI. Disordered stretches follow at residues 1-55 and 270-321; these read MSSS…PLEP and WFKN…GITN. At S2 the chain carries N-acetylserine. Positions 223–282 form a DNA-binding region, homeobox; that stretch reads GEETVYCFKEKSRNALKELYKQNRYPSPAEKRHLAKITGLSLTQVSNWFKNRRQRDRNPS. Basic and acidic residues-rich tracts occupy residues 278 to 290 and 299 to 308; these read DRNPSETQSKSES and ESSKGHEDLS. S640 carries the phosphoserine modification.

This sequence belongs to the SIX/Sine oculis homeobox family. Interacts with EYA3; acts cooperatively with EYA3 to transactivate target genes through interaction and nuclear translocation of EYA3 protein.

The protein resides in the nucleus. The protein localises to the cytoplasm. Functionally, transcriptional regulator which can act as both a transcriptional repressor and activator by binding a DNA sequence on these target genes and is involved in processes like cell differentiation, cell migration and cell survival. Transactivates gene expression by binding a 5'-[CAT]A[CT][CT][CTG]GA[GAT]-3' motif present in the Trex site and a 5'-TCA[AG][AG]TTNC-3' motif present in the MEF3 site of the muscle-specific genes enhancer. Acts cooperatively with EYA proteins to transactivate their target genes through interaction and nuclear translocation of EYA protein. Acts synergistically with SIX1 to regulate target genes involved in formation of various organs, including muscle, kidney, gonad, ganglia, olfactory epithelium and cranial skeleton. Plays a role in several important steps of muscle development. Controls the genesis of hypaxial myogenic progenitors in the dermomyotome by transactivating PAX3 and the delamination and migration of the hypaxial precursors from the ventral lip to the limb buds through the transactivation of PAX3, MET and LBX1. Controls myoblast determination by transactivating MYF5, MYOD1 and MYF6. Controls somitic differentiation in myocyte through MYOG transactivation. Plays a role in synaptogenesis and sarcomere organization by participating in myofiber specialization during embryogenesis by activating fast muscle program in the primary myotome resulting in an up-regulation of fast muscle genes, including ATP2A1, MYL1 and TNNT3. Simultaneously, is also able to activate inhibitors of slow muscle genes, such as SOX6, HRASLS, and HDAC4, thereby restricting the activation of the slow muscle genes. During muscle regeneration, negatively regulates differentiation of muscle satellite cells through down-regulation of MYOG expression. During kidney development regulates the early stages of metanephros development and ureteric bud formation through regulation of GDNF, SALL1, PAX8 and PAX2 expression. Plays a role in gonad development by regulating both testis determination and size determination. In gonadal sex determination, transactivates ZFPM2 by binding a MEF3 consensus sequence, resulting in SRY up-regulation. In gonadal size determination, transactivates NR5A1 by binding a MEF3 consensus sequence resulting in gonadal precursor cell formation regulation. During olfactory development mediates the specification and patterning of olfactory placode through fibroblast growth factor and BMP4 signaling pathways and also regulates epithelial cell proliferation during placode formation. Promotes survival of sensory neurons during early trigeminal gangliogenesis. In the developing dorsal root ganglia, up-regulates SLC12A2 transcription. Regulates early thymus/parathyroid organogenesis through regulation of GCM2 and FOXN1 expression. Forms gustatory papillae during development of the tongue. Also plays a role during embryonic cranial skeleton morphogenesis. The protein is Homeobox protein SIX4 (SIX4) of Homo sapiens (Human).